The following is a 763-amino-acid chain: G protein-regulated inducer of neurite outgrowth 3 (763 aa).

Disordered regions lie at residues 1–48 (MGTV…IGNV), 65–111 (QACV…APGL), and 192–268 (ENSQ…GATC). Polar residues predominate over residues 27 to 44 (ESQSVSPQPAQPDNNASG). Basic and acidic residues predominate over residues 93-104 (KTPDDFLLHGSK). Residues 237–250 (ENKQPSATALNTTA) are compositionally biased toward polar residues. 2 positions are modified to phosphoserine: serine 323 and serine 359. Disordered stretches follow at residues 420–452 (TSSQ…PDFQ), 471–624 (NQGL…PRRG), and 711–737 (VKTQ…GRQH). Positions 437 to 450 (KEATSRQPEGTNPD) are enriched in polar residues. 2 stretches are compositionally biased toward basic and acidic residues: residues 480-496 (REPE…KAES) and 518-539 (PTDK…KDHA). Low complexity predominate over residues 593 to 609 (SLSLPSDGTGDSSPGSG).

In terms of biological role, may be involved in neurite outgrowth. The polypeptide is G protein-regulated inducer of neurite outgrowth 3 (Gprin3) (Mus musculus (Mouse)).